The following is a 492-amino-acid chain: Putative methyl-accepting chemotaxis AlkN (492 aa).

Helical transmembrane passes span 9-29 (FFLILVMAGFSFFVALFGMRL) and 159-179 (YVYFLVVSINCLFFVVIFLLM). One can recognise an HAMP domain in the interval 180 to 231 (KKTRSSIDEIVHVMNDMSRGDLTYRTIPSNDEVGKMQSSIIAMGAGVSALIE). Residues 236-472 (IQGDLFNSAG…DMLDNANIIR (237 aa)) form the Methyl-accepting transducer domain.

This sequence belongs to the methyl-accepting chemotaxis (MCP) protein family.

The protein resides in the membrane. It functions in the pathway hydrocarbon metabolism; alkane degradation. Chemotactic-signal transducers respond to changes in the concentration of attractants and repellents in the environment, transduce a signal from the outside to the inside of the cell, and facilitate sensory adaptation through the variation of the level of methylation. In Ectopseudomonas oleovorans (Pseudomonas oleovorans), this protein is Putative methyl-accepting chemotaxis AlkN (alkN).